A 383-amino-acid polypeptide reads, in one-letter code: UDP-D-xylose:L-fucose alpha-1,3-D-xylosyltransferase 3 (383 aa).

Residues 1–20 are Cytoplasmic-facing; it reads MAQQSQRPISNRHISLLNRN. Residues 21 to 41 form a helical; Signal-anchor for type II membrane protein membrane-spanning segment; it reads GLILLLLLALFVILGVFLPLT. Residues 42 to 383 lie on the Lumenal side of the membrane; that stretch reads KSSLFMFPNT…KNRGKKHKLP (342 aa). N-linked (GlcNAc...) asparagine glycosylation is found at asparagine 50, asparagine 82, and asparagine 157. Positions 180–182 match the DXD motif motif; it reads DVD. N-linked (GlcNAc...) asparagine glycosylation is found at asparagine 212, asparagine 258, asparagine 301, asparagine 306, asparagine 357, and asparagine 364.

It belongs to the glycosyltransferase 77 family. It depends on Mn(2+) as a cofactor. Requires Mg(2+) as cofactor. In terms of processing, glycosylated. In terms of tissue distribution, expressed around trichome support cells in the adaxial epidermis of rosette leaves, in cauline leaves, petals and both the proximal and distal ends of siliques.

Its subcellular location is the golgi apparatus membrane. Functionally, catalyzes the transfer of D-xylose from UDP-alpha-D-xylose onto L-fucose. Probably involved in the biosynthesis of rhamnogalacturonan II (RG-II) through xylosylation of the internal fucose moiety of the A-chain of RG-II, a structurally complex pectic polysaccharide of the primary cell wall. RG-II is essential for the cell wall integrity of rapidly growing tissues such as roots and pollen tube growth and elongation. This Arabidopsis thaliana (Mouse-ear cress) protein is UDP-D-xylose:L-fucose alpha-1,3-D-xylosyltransferase 3.